Reading from the N-terminus, the 157-residue chain is MRIGHGFDVHRFGGEGPLIIGGVRIAHPQGLLAHSDGDVALHAATDALLGAAALGDIGKLFPDTDPAYKGADSRALLREAYRSIRARGYRLGNLDITLIAQAPKMAPHIPQMRVFLAEDLQCPIDDVNVKATTTEKLGFTGRGEGIACAAVALLIKE.

Residues Asp8 and His10 each coordinate a divalent metal cation. 4-CDP-2-C-methyl-D-erythritol 2-phosphate is bound by residues 8 to 10 and 34 to 35; these read DVH and HS. Residue His42 coordinates a divalent metal cation. 4-CDP-2-C-methyl-D-erythritol 2-phosphate is bound by residues 56–58, 61–65, 100–106, 132–135, Phe139, and Arg142; these read DIG, FPDTD, AQAPKMA, and TTTE.

It belongs to the IspF family. In terms of assembly, homotrimer. A divalent metal cation is required as a cofactor.

It carries out the reaction 4-CDP-2-C-methyl-D-erythritol 2-phosphate = 2-C-methyl-D-erythritol 2,4-cyclic diphosphate + CMP. It functions in the pathway isoprenoid biosynthesis; isopentenyl diphosphate biosynthesis via DXP pathway; isopentenyl diphosphate from 1-deoxy-D-xylulose 5-phosphate: step 4/6. Involved in the biosynthesis of isopentenyl diphosphate (IPP) and dimethylallyl diphosphate (DMAPP), two major building blocks of isoprenoid compounds. Catalyzes the conversion of 4-diphosphocytidyl-2-C-methyl-D-erythritol 2-phosphate (CDP-ME2P) to 2-C-methyl-D-erythritol 2,4-cyclodiphosphate (ME-CPP) with a corresponding release of cytidine 5-monophosphate (CMP). The sequence is that of 2-C-methyl-D-erythritol 2,4-cyclodiphosphate synthase from Edwardsiella ictaluri (strain 93-146).